The sequence spans 94 residues: DNA-directed RNA polymerase subunit omega (94 aa).

This sequence belongs to the RNA polymerase subunit omega family. In terms of assembly, the RNAP catalytic core consists of 2 alpha, 1 beta, 1 beta' and 1 omega subunit. When a sigma factor is associated with the core the holoenzyme is formed, which can initiate transcription.

The catalysed reaction is RNA(n) + a ribonucleoside 5'-triphosphate = RNA(n+1) + diphosphate. Functionally, promotes RNA polymerase assembly. Latches the N- and C-terminal regions of the beta' subunit thereby facilitating its interaction with the beta and alpha subunits. This is DNA-directed RNA polymerase subunit omega from Shewanella pealeana (strain ATCC 700345 / ANG-SQ1).